The following is a 124-amino-acid chain: Large ribosomal subunit protein bL21 (124 aa).

The protein belongs to the bacterial ribosomal protein bL21 family. Part of the 50S ribosomal subunit. Contacts protein L20.

In terms of biological role, this protein binds to 23S rRNA in the presence of protein L20. The polypeptide is Large ribosomal subunit protein bL21 (Sinorhizobium medicae (strain WSM419) (Ensifer medicae)).